A 1226-amino-acid polypeptide reads, in one-letter code: Polyamine-transporting ATPase 13A3 (1226 aa).

The Cytoplasmic segment spans residues 1–28 (MDREERKTINQGQEDEMEIYGYNLSRWK). The stretch at 29 to 49 (LAIVSLGVICSGGFLLLLLYW) is an intramembrane region. Residues 50 to 205 (MPEWRVKATC…IAVKVPSVFK (156 aa)) are Cytoplasmic-facing. Residue S98 is modified to Phosphoserine. Residues 206–226 (LLIKEVLNPFYIFQLFSVILW) form a helical membrane-spanning segment. Residues 227–232 (STDEYY) lie on the Lumenal side of the membrane. The chain crosses the membrane as a helical span at residues 233-253 (YYALAIVVMSIVSIVSSLYSI). Topologically, residues 254–409 (RKQYVMLHDM…KPTDFKLYRD (156 aa)) are cytoplasmic. A helical transmembrane segment spans residues 410–430 (AYLFLLCLVAVAGIGFIYTII). Residues 431-448 (NSILNEVQVGVIIIESLD) lie on the Lumenal side of the membrane. A helical membrane pass occupies residues 449–469 (IITITVPPALPAAMTAGIVYA). At 470 to 940 (QRRLKKIGIF…ALITSFCVFK (471 aa)) the chain is on the cytoplasmic side. The active-site 4-aspartylphosphate intermediate is D498. D498 and T500 together coordinate Mg(2+). Residues 498 to 500 (DKT), F628, R684, and D750 contribute to the ATP site. S817 is subject to Phosphoserine. The Mg(2+) site is built by D883 and D887. Residue 883 to 887 (DGAND) participates in ATP binding. A helical membrane pass occupies residues 941–961 (FMALYSIIQYFSVTLLYSILS). Position 962 (N962) is a topological domain, lumenal. The helical transmembrane segment at 963–983 (LGDFQFLFIDLAIILVVVFTM) threads the bilayer. At 984 to 999 (SLNPAWKELVAQRPPS) the chain is on the cytoplasmic side. Residues 1000-1020 (GLISGALLFSVLSQIIICIGF) traverse the membrane as a helical segment. Topologically, residues 1021-1073 (QSLGFFWVKQQPWYEVWHPKSDACNTTGSGFWNSSHVDNETELDEHNIQNYEN) are lumenal. The chain crosses the membrane as a helical span at residues 1074-1094 (TTVFFISSFQYLIVAIAFSKG). At 1095–1105 (KPFRQPCYKNY) the chain is on the cytoplasmic side. Residues 1106-1126 (FFVFSVIFLYIFILFIMLYPV) traverse the membrane as a helical segment. The Lumenal portion of the chain corresponds to 1127 to 1143 (ASVDQVLQIVCVPYQWR). Residues 1144 to 1164 (VTMLIIVLVNAFVSITVEESV) traverse the membrane as a helical segment. Residues 1165–1226 (DRWGKCCLPW…NGSCQIITIT (62 aa)) lie on the Cytoplasmic side of the membrane.

It belongs to the cation transport ATPase (P-type) (TC 3.A.3) family. Type V subfamily. Broadly expressed.

Its subcellular location is the recycling endosome membrane. The protein localises to the early endosome membrane. It is found in the late endosome membrane. The enzyme catalyses putrescine(out) + ATP + H2O = putrescine(in) + ADP + phosphate + H(+). Functionally, ATP-driven pump involved in endocytosis-dependent polyamine transport. Uses ATP as an energy source to transfer polyamine precursor putrescine from the endosomal compartment to the cytosol. The chain is Polyamine-transporting ATPase 13A3 from Homo sapiens (Human).